The primary structure comprises 422 residues: UDP-N-acetylglucosamine 1-carboxyvinyltransferase (422 aa).

23 to 24 is a binding site for phosphoenolpyruvate; sequence KN. Arginine 92 serves as a coordination point for UDP-N-acetyl-alpha-D-glucosamine. The active-site Proton donor is cysteine 116. Position 116 is a 2-(S-cysteinyl)pyruvic acid O-phosphothioketal (cysteine 116). UDP-N-acetyl-alpha-D-glucosamine is bound by residues 121-125, 161-165, aspartate 306, and isoleucine 328; these read RPVDL and KVSVG.

This sequence belongs to the EPSP synthase family. MurA subfamily.

It is found in the cytoplasm. The catalysed reaction is phosphoenolpyruvate + UDP-N-acetyl-alpha-D-glucosamine = UDP-N-acetyl-3-O-(1-carboxyvinyl)-alpha-D-glucosamine + phosphate. The protein operates within cell wall biogenesis; peptidoglycan biosynthesis. Cell wall formation. Adds enolpyruvyl to UDP-N-acetylglucosamine. The protein is UDP-N-acetylglucosamine 1-carboxyvinyltransferase of Aliivibrio fischeri (strain MJ11) (Vibrio fischeri).